The primary structure comprises 122 residues: Large ribosomal subunit protein uL14 (122 aa).

Belongs to the universal ribosomal protein uL14 family. As to quaternary structure, part of the 50S ribosomal subunit. Forms a cluster with proteins L3 and L19. In the 70S ribosome, L14 and L19 interact and together make contacts with the 16S rRNA in bridges B5 and B8.

In terms of biological role, binds to 23S rRNA. Forms part of two intersubunit bridges in the 70S ribosome. The protein is Large ribosomal subunit protein uL14 of Psychrobacter arcticus (strain DSM 17307 / VKM B-2377 / 273-4).